Reading from the N-terminus, the 189-residue chain is Auxin-responsive protein IAA3 (189 aa).

Residues 12–16 carry the EAR-like (transcriptional repression) motif; sequence LRLGL. Residues 42–65 are disordered; sequence TDTEKEIESSSRKTETSPPRKAQI. Residues 43-56 show a composition bias toward basic and acidic residues; that stretch reads DTEKEIESSSRKTE. The 88-residue stretch at 92 to 179 folds into the PB1 domain; it reads GIYVKVSMDG…TCKRLRIMKG (88 aa).

The protein belongs to the Aux/IAA family. As to quaternary structure, homodimers and heterodimers. Interacts with TPL. Interacts with TIR1, the F-box component of the Skp1-Cdc53/cullin-F-box (SCFTIR1) E3 ubiquitin ligase complex. In terms of processing, phosphorylated by phytochrome A in vitro. In terms of tissue distribution, highly expressed in stems and flowers. Expressed in hypocotyls, cotyledons and leaves, but barely detected in roots. Expressed in root tips. In the root meristem, specifically detected at the vascular tissue transition zone.

It is found in the nucleus. In terms of biological role, aux/IAA proteins are short-lived transcriptional factors that function as repressors of early auxin response genes at low auxin concentrations. Repression is thought to result from the interaction with auxin response factors (ARFs), proteins that bind to the auxin-responsive promoter element (AuxRE). Plays a central role in auxin regulation of root growth, in gravitropism, and in lateral root formation. Regulated by an auxin-induced protein turnover. Formation of heterodimers with ARF proteins may alter their ability to modulate early auxin response genes expression. When activated by cytokinin, restricts the expression of the PIN genes to the vascular transition zone. Induction of SHY2 in the vascular transition zone restricts BRX expression to down-regulate PIN3 and thus limit meristem growth, but proper SHY2 expression requires BRX. Involved in meristem growth and in determining its size. May participate in strigolactone signaling to regulate meristem size and lateral root formation. The chain is Auxin-responsive protein IAA3 (IAA3) from Arabidopsis thaliana (Mouse-ear cress).